A 2146-amino-acid chain; its full sequence is Conidial pigment polyketide synthase alb1 (2146 aa).

The interval 8–244 is N-terminal acylcarrier protein transacylase domain (SAT); the sequence is YLFGDQTISC…KAPGVSGPYH (237 aa). Residues 375–806 form the Ketosynthase family 3 (KS3) domain; sequence RSKIAIIGMS…GGNTALLMED (432 aa). Catalysis depends on for beta-ketoacyl synthase activity residues Cys-547, His-682, and His-724. Residues 911 to 1232 are malonyl-CoA:ACP transacylase (MAT) domain; it reads GFVFTGQGAQ…LSTLHLAGVE (322 aa). Residue Ser-1001 is the For acyl/malonyl transferase activity of the active site. Positions 1290–1602 are product template (PT) domain; it reads TTAAQKIVEC…ARKILDTVLP (313 aa). The N-terminal hotdog fold stretch occupies residues 1294–1427; the sequence is QKIVECREDG…VKLFNCAERE (134 aa). The region spanning 1294-1598 is the PKS/mFAS DH domain; it reads QKIVECREDG…FQALARKILD (305 aa). The active-site Proton acceptor; for dehydratase activity is the His-1326. The tract at residues 1453–1598 is C-terminal hotdog fold; sequence AHRMQRGMVY…FQALARKILD (146 aa). The active-site Proton donor; for dehydratase activity is the Asp-1511. The interval 1611 to 1644 is disordered; sequence GAPAPAPARPIGEKKAPPPIKVTGPPKPNPSNAR. A compositionally biased stretch (pro residues) spans 1627–1639; sequence PPPIKVTGPPKPN. A Carrier 1 domain is found at 1647–1721; the sequence is SPVVARALEI…DFKAYLAEKG (75 aa). Position 1681 is an O-(pantetheine 4'-phosphoryl)serine (Ser-1681). The interval 1724–1769 is disordered; the sequence is DSSSPEPSSEPESKFSFNSDASSEASSGLTTPGITSPVKHEAPKGG. The span at 1738 to 1750 shows a compositional bias: low complexity; it reads FSFNSDASSEASS. The region spanning 1768-1845 is the Carrier 2 domain; it reads GGQNKVWKSI…AVQAALDLKP (78 aa). Position 1805 is an O-(pantetheine 4'-phosphoryl)serine (Ser-1805). The interval 1892-2019 is claisen cyclase domain; that stretch reads KLFMFPDGSG…SIGLFGDGKR (128 aa). Ser-1962 (for Claisen cyclase activity) is an active-site residue.

The protein resides in the endosome. It catalyses the reaction 6 malonyl-CoA + acetyl-CoA + 6 H(+) = naphtopyrone YWA1 + 6 CO2 + 7 CoA + H2O. The protein operates within pigment biosynthesis; melanin biosynthesis. In terms of biological role, non-reducing polyketide synthase; part of the gene cluster that mediates the biosynthesis of dihydroxynaphthalene (DHN)-melanin, a bluish-green pigment and a structural component of the conidial wall. The first step of the pathway is the production of the heptaketide naphtopyrone YWA1 by the polyketide synthase alb1 though condensation of acetyl-CoA with malonyl-CoA. The naphtopyrone YWA1 is then converted to the pentaketide 1,3,6,8-tetrahydroxynaphthalene (1,3,6,8-THN) by the heptaketide hydrolyase ayg1 though chain-length shortening. 1,3,6,8-THN is substrate of the hydroxynaphthalene reductase arp2 to yield scytalone. The scytalone dehydratase arp1 then reduces scytalone to 1,3,8-THN. 1,3,8-THN is also substrate of the hydroxynaphthalene reductase arp2 to yield vermelone. Vermelone is further converted by the multicopper oxidase abr1 to 1,8-DHN. Finally the laccase abr2 transforms 1,8-DHN to DHN-melanin. DHN-melanin biosynthesis appears to be initiated in endosomes where early enzymes (abl1, ayg1, arp1 and arp2) localize, with exocytosis leading to melanin deposition on the cell surface where late enzymes (abr1 and abr2) localize. DHN-melanin is an important structural component of the outer cell wall and is required for the presence of conidial surface hydrophobins. DHN-melanin also plays a crucial role in fungal virulence, including a protective role against the host's immune defenses. DHN-melanin protects also conidia against amoeba predation. The chain is Conidial pigment polyketide synthase alb1 from Aspergillus fumigatus (strain ATCC MYA-4609 / CBS 101355 / FGSC A1100 / Af293) (Neosartorya fumigata).